A 218-amino-acid chain; its full sequence is Pyridoxine/pyridoxamine 5'-phosphate oxidase (218 aa).

Substrate-binding positions include 11–14 (RVEY) and K75. Residues 70–75 (RTVLCK), 85–86 (YT), K92, and Q114 each bind FMN. Positions 132, 136, and 140 each coordinate substrate. Residues 149–150 (QS) and W195 each bind FMN. Position 201 to 203 (201 to 203 (RVH)) interacts with substrate. Position 205 (R205) interacts with FMN.

Belongs to the pyridoxamine 5'-phosphate oxidase family. In terms of assembly, homodimer. The cofactor is FMN.

It catalyses the reaction pyridoxamine 5'-phosphate + O2 + H2O = pyridoxal 5'-phosphate + H2O2 + NH4(+). The enzyme catalyses pyridoxine 5'-phosphate + O2 = pyridoxal 5'-phosphate + H2O2. Its pathway is cofactor metabolism; pyridoxal 5'-phosphate salvage; pyridoxal 5'-phosphate from pyridoxamine 5'-phosphate: step 1/1. The protein operates within cofactor metabolism; pyridoxal 5'-phosphate salvage; pyridoxal 5'-phosphate from pyridoxine 5'-phosphate: step 1/1. Catalyzes the oxidation of either pyridoxine 5'-phosphate (PNP) or pyridoxamine 5'-phosphate (PMP) into pyridoxal 5'-phosphate (PLP). The polypeptide is Pyridoxine/pyridoxamine 5'-phosphate oxidase (Mycolicibacterium gilvum (strain PYR-GCK) (Mycobacterium gilvum (strain PYR-GCK))).